The chain runs to 149 residues: MKVEVCSFSGSKVYPGAGRLFVRGDNKVFRFVNKKSESLFLQRKNPRRLSWTVLYRRMHKKGISEEHAKKRTRRTVKHQRGIVGANLDVIKEKRNQRPEVRAAARAAALKQRKDKRAASESEKKAIKAKSAASSARGQAIKNAKVAARR.

Phosphoserine is present on Ser50. The segment at 96-149 (QRPEVRAAARAAALKQRKDKRAASESEKKAIKAKSAASSARGQAIKNAKVAARR) is disordered. The span at 116–125 (RAASESEKKA) shows a compositional bias: basic and acidic residues.

It belongs to the eukaryotic ribosomal protein eL24 family. In terms of assembly, component of the large ribosomal subunit (LSU). Mature yeast ribosomes consist of a small (40S) and a large (60S) subunit. The 40S small subunit contains 1 molecule of ribosomal RNA (18S rRNA) and at least 33 different proteins. The large 60S subunit contains 3 rRNA molecules (25S, 5.8S and 5S rRNA) and at least 46 different proteins.

It localises to the cytoplasm. Functionally, component of the ribosome, a large ribonucleoprotein complex responsible for the synthesis of proteins in the cell. The small ribosomal subunit (SSU) binds messenger RNAs (mRNAs) and translates the encoded message by selecting cognate aminoacyl-transfer RNA (tRNA) molecules. The large subunit (LSU) contains the ribosomal catalytic site termed the peptidyl transferase center (PTC), which catalyzes the formation of peptide bonds, thereby polymerizing the amino acids delivered by tRNAs into a polypeptide chain. The nascent polypeptides leave the ribosome through a tunnel in the LSU and interact with protein factors that function in enzymatic processing, targeting, and the membrane insertion of nascent chains at the exit of the ribosomal tunnel. The polypeptide is Large ribosomal subunit protein eL24B (rpl2402) (Schizosaccharomyces pombe (strain 972 / ATCC 24843) (Fission yeast)).